The chain runs to 125 residues: Cu-Zn superoxide dismutase-like protein OPG175 (125 aa).

Residues Cys-52 and Cys-102 are joined by a disulfide bond.

This sequence belongs to the Cu-Zn superoxide dismutase family.

The protein resides in the virion. Its subcellular location is the host cytoplasm. Superoxide dismutase-like protein with no enzymatic activity. The protein is Cu-Zn superoxide dismutase-like protein OPG175 (OPG175) of Cowpox virus (strain Brighton Red) (CPV).